We begin with the raw amino-acid sequence, 332 residues long: Putative D-threonate 4-phosphate dehydrogenase (332 aa).

The substrate site is built by H140 and T141. Residues H170, H214, and H270 each coordinate a divalent metal cation. Substrate contacts are provided by K278, N287, and R296.

The protein belongs to the PdxA family. PdxA2 subfamily. In terms of assembly, homodimer. A divalent metal cation is required as a cofactor.

The enzyme catalyses 4-O-phospho-D-threonate + NAD(+) = dihydroxyacetone phosphate + CO2 + NADH. Its function is as follows. Catalyzes the NAD-dependent oxidation and subsequent decarboxylation of D-threonate 4-phosphate to produce dihydroxyacetone phosphate (DHAP). The polypeptide is Putative D-threonate 4-phosphate dehydrogenase (Oceanobacillus iheyensis (strain DSM 14371 / CIP 107618 / JCM 11309 / KCTC 3954 / HTE831)).